Consider the following 347-residue polypeptide: GMP reductase (347 aa).

108–131 (ADFQKTKDIMALTDDLIFICVDIA) provides a ligand contact to NADP(+). The K(+) site is built by glycine 181 and glycine 183. The active-site Thioimidate intermediate is the cysteine 186. 216–239 (IIGDGGCSCAGDVSKAFGGGADFV) provides a ligand contact to NADP(+).

The protein belongs to the IMPDH/GMPR family. GuaC type 1 subfamily. Homotetramer.

It carries out the reaction IMP + NH4(+) + NADP(+) = GMP + NADPH + 2 H(+). Its function is as follows. Catalyzes the irreversible NADPH-dependent deamination of GMP to IMP. It functions in the conversion of nucleobase, nucleoside and nucleotide derivatives of G to A nucleotides, and in maintaining the intracellular balance of A and G nucleotides. The protein is GMP reductase of Aliivibrio salmonicida (strain LFI1238) (Vibrio salmonicida (strain LFI1238)).